Here is a 180-residue protein sequence, read N- to C-terminus: Large ribosomal subunit protein eL18 (180 aa).

Positions 152–180 (FGPAPGVPGSHTKPYVISKSRERTNAHRA) are disordered. A compositionally biased stretch (basic and acidic residues) spans 170–180 (KSRERTNAHRA).

It belongs to the eukaryotic ribosomal protein eL18 family.

Its subcellular location is the cytoplasm. The protein is Large ribosomal subunit protein eL18 (RPL18) of Taenia asiatica (Asian tapeworm).